Consider the following 372-residue polypeptide: 4-hydroxy-3-methylbut-2-en-1-yl diphosphate synthase (flavodoxin) (372 aa).

Cysteine 270, cysteine 273, cysteine 305, and glutamate 312 together coordinate [4Fe-4S] cluster.

It belongs to the IspG family. [4Fe-4S] cluster is required as a cofactor.

The catalysed reaction is (2E)-4-hydroxy-3-methylbut-2-enyl diphosphate + oxidized [flavodoxin] + H2O + 2 H(+) = 2-C-methyl-D-erythritol 2,4-cyclic diphosphate + reduced [flavodoxin]. It participates in isoprenoid biosynthesis; isopentenyl diphosphate biosynthesis via DXP pathway; isopentenyl diphosphate from 1-deoxy-D-xylulose 5-phosphate: step 5/6. Converts 2C-methyl-D-erythritol 2,4-cyclodiphosphate (ME-2,4cPP) into 1-hydroxy-2-methyl-2-(E)-butenyl 4-diphosphate. The sequence is that of 4-hydroxy-3-methylbut-2-en-1-yl diphosphate synthase (flavodoxin) from Aliivibrio salmonicida (strain LFI1238) (Vibrio salmonicida (strain LFI1238)).